Here is a 229-residue protein sequence, read N- to C-terminus: Endonuclease V (229 aa).

Mg(2+) contacts are provided by Asp-43 and Asp-111.

This sequence belongs to the endonuclease V family. The cofactor is Mg(2+).

It localises to the cytoplasm. It carries out the reaction Endonucleolytic cleavage at apurinic or apyrimidinic sites to products with a 5'-phosphate.. DNA repair enzyme involved in the repair of deaminated bases. Selectively cleaves double-stranded DNA at the second phosphodiester bond 3' to a deoxyinosine leaving behind the intact lesion on the nicked DNA. The protein is Endonuclease V of Rippkaea orientalis (strain PCC 8801 / RF-1) (Cyanothece sp. (strain PCC 8801)).